The following is a 200-amino-acid chain: Potassium-transporting ATPase KdpC subunit (200 aa).

The helical transmembrane segment at 6–26 (PALVLLILLTLITGIAYPLLT) threads the bilayer.

The protein belongs to the KdpC family. In terms of assembly, the system is composed of three essential subunits: KdpA, KdpB and KdpC.

Its subcellular location is the cell inner membrane. Part of the high-affinity ATP-driven potassium transport (or Kdp) system, which catalyzes the hydrolysis of ATP coupled with the electrogenic transport of potassium into the cytoplasm. This subunit acts as a catalytic chaperone that increases the ATP-binding affinity of the ATP-hydrolyzing subunit KdpB by the formation of a transient KdpB/KdpC/ATP ternary complex. The protein is Potassium-transporting ATPase KdpC subunit of Yersinia pseudotuberculosis serotype O:1b (strain IP 31758).